A 420-amino-acid chain; its full sequence is Tryptophan synthase beta chain (420 aa).

N6-(pyridoxal phosphate)lysine is present on lysine 100.

The protein belongs to the TrpB family. In terms of assembly, tetramer of two alpha and two beta chains. The cofactor is pyridoxal 5'-phosphate.

It catalyses the reaction (1S,2R)-1-C-(indol-3-yl)glycerol 3-phosphate + L-serine = D-glyceraldehyde 3-phosphate + L-tryptophan + H2O. Its pathway is amino-acid biosynthesis; L-tryptophan biosynthesis; L-tryptophan from chorismate: step 5/5. The beta subunit is responsible for the synthesis of L-tryptophan from indole and L-serine. This chain is Tryptophan synthase beta chain, found in Pyrobaculum islandicum (strain DSM 4184 / JCM 9189 / GEO3).